A 375-amino-acid polypeptide reads, in one-letter code: Alcohol dehydrogenase 6 (375 aa).

Ser23 is subject to Phosphoserine. Residues Cys47, His69, Cys99, Cys102, Cys105, Cys113, and Cys175 each coordinate Zn(2+). Residues 200–205 (GLGGVG), Asp224, Lys229, 293–295 (VGL), and Arg370 contribute to the NAD(+) site.

It belongs to the zinc-containing alcohol dehydrogenase family. Class-V subfamily. In terms of assembly, dimer. The cofactor is Zn(2+).

The protein resides in the cytoplasm. The catalysed reaction is a primary alcohol + NAD(+) = an aldehyde + NADH + H(+). It catalyses the reaction a secondary alcohol + NAD(+) = a ketone + NADH + H(+). Functionally, alcohol dehydrogenase. Catalyzes the NAD-dependent oxidation of primary alcohols to the corresponding aldehydes. Oxidizes secondary alcohols to the corresponding ketones. The chain is Alcohol dehydrogenase 6 (ADH6) from Pongo abelii (Sumatran orangutan).